Consider the following 742-residue polypeptide: MEGVMENVGGLMQNIRRRHMSITEMTEESVRLGVAQMDTGFKKIKEMSIMVLETGLRLPGLLFIELLWRYQGFSFEDISDDMMKQTPLSYFDIPTMLDFVHRRNFDHHAAIILSYFVIFISLMFLTLPLSRLIRMYSHFLSVFLFGVAYKLSAIYVDLEMKTGEEELKLDGLIKLERHGFHFLAQMLLVVLQSMLLEVDGEPWRVALPVFALPIVARMCGCPMDKLKNAHNYACTGTMIFIATYMLYRAPSLIKSTKTALRQIKAVFMVHGLADGVAVLWRKLRILELLTFTWITMFLMVLYVELIDKGRTWSEVGRILLTGVAETTNTPITLAALAVSVSYVCKWIADLTKLITGGTRSHGHVLAHSGYTEAVSVVILCIQTGFLGMQVEQKTILLALVLYIVISALLQSLFEIIEVVLLNLPSSPTASRARHARCICIALLLVVIPFFTTKTMLALLPIDIYTAIIIANSATVTARAIGVILKYIVLIVETKSEEPWEGIDDLTYYIDCANKGIELLAAKVVMVFGCMQVVKVGFSFATFAILLFHVIVNIYKRLEHTVSFIKNRNAAVKNINRLSKADVVQLREREDVCAICFIEMKEEARITPCKHYFHGPCLRKWLAVKMVCPLCYTYMKEDDFDSKSSSSGTLNEVQQNEEGAAVEENPENPEEQPEAPNAERAPGDMFDWDDLFGFRAERETRNRNEQRIHGARDMWPLLVDNDAYESDSDAGSEELVIEEENNN.

11 consecutive transmembrane segments (helical) span residues 109–129, 138–158, 178–198, 233–253, 285–305, 318–338, 368–388, 395–415, 438–458, 463–483, and 533–553; these read AAII…TLPL, HFLS…YVDL, HGFH…LLEV, ACTG…PSLI, ILEL…YVEL, ILLT…ALAV, SGYT…FLGM, ILLA…LFEI, ICIA…MLAL, IYTA…IGVI, and VKVG…IVNI. The RING-type; atypical zinc-finger motif lies at 592 to 630; it reads CAICFIEMKEEARITPCKHYFHGPCLRKWLAVKMVCPLC. Disordered regions lie at residues 642-684 and 722-742; these read KSSS…PGDM and AYES…ENNN. The segment covering 659–672 has biased composition (acidic residues); that stretch reads AAVEENPENPEEQP.

The protein localises to the membrane. Its subcellular location is the golgi apparatus. It localises to the cis-Golgi network. The protein resides in the trans-Golgi network. It carries out the reaction S-ubiquitinyl-[E2 ubiquitin-conjugating enzyme]-L-cysteine + [acceptor protein]-L-lysine = [E2 ubiquitin-conjugating enzyme]-L-cysteine + N(6)-ubiquitinyl-[acceptor protein]-L-lysine.. Its function is as follows. E3 ubiquitin ligase that catalyzes the direct transfer of ubiquitin from E2 ubiquitin-conjugating enzyme to a specific substrate. Acting downstream of probable Golgi transport protein eas-1, involved in inhibition of activation of transcription factor sbp-1, thereby playing a role in regulating AMsh glial cell size. The sequence is that of RING finger protein 145 homolog from Caenorhabditis elegans.